We begin with the raw amino-acid sequence, 227 residues long: ATP-dependent dethiobiotin synthetase BioD (227 aa).

13–18 (EVGKSV) contacts ATP. Residue Ser17 participates in Mg(2+) binding. The active site involves Lys38. Ser42 is a binding site for substrate. Residues Asp55, 116–119 (EGAG), and 176–177 (ND) contribute to the ATP site. 2 residues coordinate Mg(2+): Asp55 and Glu116.

Belongs to the dethiobiotin synthetase family. As to quaternary structure, homodimer. It depends on Mg(2+) as a cofactor.

Its subcellular location is the cytoplasm. It catalyses the reaction (7R,8S)-7,8-diammoniononanoate + CO2 + ATP = (4R,5S)-dethiobiotin + ADP + phosphate + 3 H(+). The protein operates within cofactor biosynthesis; biotin biosynthesis; biotin from 7,8-diaminononanoate: step 1/2. Catalyzes a mechanistically unusual reaction, the ATP-dependent insertion of CO2 between the N7 and N8 nitrogen atoms of 7,8-diaminopelargonic acid (DAPA, also called 7,8-diammoniononanoate) to form a ureido ring. The polypeptide is ATP-dependent dethiobiotin synthetase BioD (Serratia marcescens).